The following is a 325-amino-acid chain: MAQMTMVQAINDALKTELKNDQDVLIFGEDVGVNGGVFRVTEGLQKEFGEDRVFDTPLAESGIGGLAMGLAVEGFRPVMEVQFLGFVFEVFDAIAGQIARTRFRSGGTKTAPVTIRGPFGGGVHTPELHADNLEGILAQSPGLKVVIPSGPYDAKGLLISSIRSNDPVVYLEHMKLYRSFREEVPEEEYTIDIGKANVKKEGNDISIITYGAMVQESMKAAEELEKDGYSVEVIDLRTVQPIDVDTIVASVEKTGRAVVVQEAQRQAGVGAAVVAELSERAILSLEAPIGRVAAADTIYPFTQAENVWLPNKNDIIEKAKETLEF.

Glu-60 contributes to the thiamine diphosphate binding site.

As to quaternary structure, heterodimer of an alpha and a beta chain. It depends on thiamine diphosphate as a cofactor.

It carries out the reaction N(6)-[(R)-lipoyl]-L-lysyl-[protein] + pyruvate + H(+) = N(6)-[(R)-S(8)-acetyldihydrolipoyl]-L-lysyl-[protein] + CO2. In terms of biological role, the pyruvate dehydrogenase complex catalyzes the overall conversion of pyruvate to acetyl-CoA and CO(2). It contains multiple copies of three enzymatic components: pyruvate dehydrogenase (E1), dihydrolipoamide acetyltransferase (E2) and lipoamide dehydrogenase (E3). The sequence is that of Pyruvate dehydrogenase E1 component subunit beta (pdhB) from Staphylococcus aureus (strain COL).